A 347-amino-acid polypeptide reads, in one-letter code: Phosphoribosylformylglycinamidine cyclo-ligase (347 aa).

It belongs to the AIR synthase family.

It localises to the cytoplasm. The enzyme catalyses 2-formamido-N(1)-(5-O-phospho-beta-D-ribosyl)acetamidine + ATP = 5-amino-1-(5-phospho-beta-D-ribosyl)imidazole + ADP + phosphate + H(+). The protein operates within purine metabolism; IMP biosynthesis via de novo pathway; 5-amino-1-(5-phospho-D-ribosyl)imidazole from N(2)-formyl-N(1)-(5-phospho-D-ribosyl)glycinamide: step 2/2. This is Phosphoribosylformylglycinamidine cyclo-ligase from Alkaliphilus metalliredigens (strain QYMF).